The chain runs to 166 residues: Ribosome maturation factor RimP (166 aa).

It belongs to the RimP family.

Its subcellular location is the cytoplasm. Functionally, required for maturation of 30S ribosomal subunits. The polypeptide is Ribosome maturation factor RimP (Paramagnetospirillum magneticum (strain ATCC 700264 / AMB-1) (Magnetospirillum magneticum)).